Consider the following 547-residue polypeptide: Solute carrier family 22 member 25 (547 aa).

Residues 1-9 lie on the Cytoplasmic side of the membrane; the sequence is MAFQDLLDQ. Residues 10-30 form a helical membrane-spanning segment; sequence VGGLGRFQILQMVFLIMFNVI. The Extracellular segment spans residues 31–145; sequence VYHQTQLENF…DLVCESQPLN (115 aa). N-linked (GlcNAc...) asparagine glycosylation is found at asparagine 56 and asparagine 102. A helical membrane pass occupies residues 146–166; the sequence is SVAKFLFMAGMMVGGNLYGHL. At 167 to 177 the chain is on the cytoplasmic side; the sequence is SDRFGRKFVLR. The chain crosses the membrane as a helical span at residues 178–198; sequence WSYLQLAIVGTCAAFAPTILV. Residues 199–204 lie on the Extracellular side of the membrane; the sequence is YCSLRF. A helical membrane pass occupies residues 205 to 225; the sequence is LAGAATFSIIVNTVLLIVEWI. The Cytoplasmic portion of the chain corresponds to 226–234; that stretch reads THQFCAMAL. Residues 235 to 255 traverse the membrane as a helical segment; that stretch reads TLTLCAASIGHITLGSLAFVI. The Extracellular portion of the chain corresponds to 256 to 259; the sequence is RDQC. The helical transmembrane segment at 260–280 threads the bilayer; sequence ILQLVMSAPCFVFFLFSRWLA. Residues 281–349 are Cytoplasmic-facing; the sequence is ESARWLIINN…LLRIPNICKR (69 aa). Residues 350–370 form a helical membrane-spanning segment; the sequence is ICFLSFVRFASTIPFWGLTLH. At 371–377 the chain is on the extracellular side; it reads LQHLGNN. The chain crosses the membrane as a helical span at residues 378–398; the sequence is VFLLQTLFGAVTLLANCVAPW. Topologically, residues 399 to 406 are cytoplasmic; it reads ALNHMSRR. Residues 407–427 traverse the membrane as a helical segment; the sequence is LSQMLLMFLLATCLLAIIFVP. Residues 428–434 are Extracellular-facing; sequence QEMQTLR. A helical membrane pass occupies residues 435–455; it reads VVLATLGVGAASLGITCSTAQ. Residues 456 to 470 are Cytoplasmic-facing; the sequence is ENELIPSIIRGRATG. A helical transmembrane segment spans residues 471–491; sequence ITGNFANIGGALASLMMILSI. Residues 492-494 are Extracellular-facing; the sequence is YSR. Residues 495-515 traverse the membrane as a helical segment; that stretch reads PLPWIIYGVFAILSGLVVLLL. Residues 516-547 are Cytoplasmic-facing; it reads PETRNQPLLDSIQDVENEGVNSLAAPQRSSVL.

The protein belongs to the major facilitator (TC 2.A.1) superfamily. Organic cation transporter (TC 2.A.1.19) family. Expressed exclusively in liver in both embryo and adult.

Its subcellular location is the membrane. This is Solute carrier family 22 member 25 from Homo sapiens (Human).